Here is a 353-residue protein sequence, read N- to C-terminus: Photosystem II D2 protein (353 aa).

The residue at position 2 (T2) is an N-acetylthreonine. The residue at position 2 (T2) is a Phosphothreonine. The helical transmembrane segment at 41–61 threads the bilayer; it reads CAYFALGGWFTGTTFVTSWYT. Residue H118 coordinates chlorophyll a. The helical transmembrane segment at 125-141 threads the bilayer; the sequence is GFMLRQFELARSVQLRP. 2 residues coordinate pheophytin a: Q130 and N143. Residues 153 to 166 form a helical membrane-spanning segment; sequence VFVSVFLIYPLGQS. A chlorophyll a-binding site is contributed by H198. Residues 208–228 traverse the membrane as a helical segment; sequence AALLCAIHGATVENTLFEDGD. A plastoquinone-binding residues include H215 and F262. Residue H215 coordinates Fe cation. H269 is a binding site for Fe cation. The helical transmembrane segment at 279 to 295 threads the bilayer; sequence GLWMSAIGVVGLALNLR.

Belongs to the reaction center PufL/M/PsbA/D family. As to quaternary structure, PSII is composed of 1 copy each of membrane proteins PsbA, PsbB, PsbC, PsbD, PsbE, PsbF, PsbH, PsbI, PsbJ, PsbK, PsbL, PsbM, PsbT, PsbX, PsbY, PsbZ, Psb30/Ycf12, at least 3 peripheral proteins of the oxygen-evolving complex and a large number of cofactors. It forms dimeric complexes. The cofactor is The D1/D2 heterodimer binds P680, chlorophylls that are the primary electron donor of PSII, and subsequent electron acceptors. It shares a non-heme iron and each subunit binds pheophytin, quinone, additional chlorophylls, carotenoids and lipids. There is also a Cl(-1) ion associated with D1 and D2, which is required for oxygen evolution. The PSII complex binds additional chlorophylls, carotenoids and specific lipids..

Its subcellular location is the plastid. The protein localises to the chloroplast thylakoid membrane. It carries out the reaction 2 a plastoquinone + 4 hnu + 2 H2O = 2 a plastoquinol + O2. In terms of biological role, photosystem II (PSII) is a light-driven water:plastoquinone oxidoreductase that uses light energy to abstract electrons from H(2)O, generating O(2) and a proton gradient subsequently used for ATP formation. It consists of a core antenna complex that captures photons, and an electron transfer chain that converts photonic excitation into a charge separation. The D1/D2 (PsbA/PsbD) reaction center heterodimer binds P680, the primary electron donor of PSII as well as several subsequent electron acceptors. D2 is needed for assembly of a stable PSII complex. The chain is Photosystem II D2 protein from Drimys granadensis.